A 306-amino-acid polypeptide reads, in one-letter code: Uracil phosphoribosyltransferase homolog (306 aa).

2 disordered regions span residues 1-28 (MATE…NPEP) and 58-87 (SSVP…NYDA). 2 stretches are compositionally biased toward polar residues: residues 13-28 (CHNQ…NPEP) and 70-79 (GGATFNSENN). GTP is bound by residues Arg130, Arg139, and 173 to 176 (EKGN). Arg183 is a binding site for 5-phospho-alpha-D-ribose 1-diphosphate. The GTP site is built by Arg200 and Arg229. 235–243 (YPILSTGNT) serves as a coordination point for 5-phospho-alpha-D-ribose 1-diphosphate. Uracil is bound at residue 296 to 298 (THF).

It belongs to the UPRTase family.

The protein resides in the cytoplasm. Its subcellular location is the nucleus. The protein is Uracil phosphoribosyltransferase homolog (UPRT) of Bos taurus (Bovine).